Here is a 564-residue protein sequence, read N- to C-terminus: Dihydroxy-acid dehydratase (564 aa).

Cys-55 provides a ligand contact to [2Fe-2S] cluster. Asp-87 is a Mg(2+) binding site. Position 128 (Cys-128) interacts with [2Fe-2S] cluster. Mg(2+) contacts are provided by Asp-129 and Lys-130. Lys-130 is subject to N6-carboxylysine. Position 200 (Cys-200) interacts with [2Fe-2S] cluster. Glu-452 contributes to the Mg(2+) binding site. The active-site Proton acceptor is Ser-478.

This sequence belongs to the IlvD/Edd family. As to quaternary structure, homodimer. Requires [2Fe-2S] cluster as cofactor. The cofactor is Mg(2+).

The enzyme catalyses (2R)-2,3-dihydroxy-3-methylbutanoate = 3-methyl-2-oxobutanoate + H2O. The catalysed reaction is (2R,3R)-2,3-dihydroxy-3-methylpentanoate = (S)-3-methyl-2-oxopentanoate + H2O. Its pathway is amino-acid biosynthesis; L-isoleucine biosynthesis; L-isoleucine from 2-oxobutanoate: step 3/4. The protein operates within amino-acid biosynthesis; L-valine biosynthesis; L-valine from pyruvate: step 3/4. Functionally, functions in the biosynthesis of branched-chain amino acids. Catalyzes the dehydration of (2R,3R)-2,3-dihydroxy-3-methylpentanoate (2,3-dihydroxy-3-methylvalerate) into 2-oxo-3-methylpentanoate (2-oxo-3-methylvalerate) and of (2R)-2,3-dihydroxy-3-methylbutanoate (2,3-dihydroxyisovalerate) into 2-oxo-3-methylbutanoate (2-oxoisovalerate), the penultimate precursor to L-isoleucine and L-valine, respectively. In Albidiferax ferrireducens (strain ATCC BAA-621 / DSM 15236 / T118) (Rhodoferax ferrireducens), this protein is Dihydroxy-acid dehydratase.